A 591-amino-acid chain; its full sequence is Aspartate--tRNA(Asp/Asn) ligase (591 aa).

Glu-170 contacts L-aspartate. Residues 194–197 (QLFK) form an aspartate region. Arg-216 contributes to the L-aspartate binding site. Residues 216–218 (RDE) and Gln-225 each bind ATP. Residue His-448 coordinates L-aspartate. An ATP-binding site is contributed by Glu-482. Arg-489 provides a ligand contact to L-aspartate. 534–537 (GWDR) serves as a coordination point for ATP. The interval 559 to 591 (GGVDPLTDAPAPITEQQRKESGIDVKPEPSKPH) is disordered. Positions 574–591 (QQRKESGIDVKPEPSKPH) are enriched in basic and acidic residues.

It belongs to the class-II aminoacyl-tRNA synthetase family. Type 1 subfamily. Homodimer.

Its subcellular location is the cytoplasm. The enzyme catalyses tRNA(Asx) + L-aspartate + ATP = L-aspartyl-tRNA(Asx) + AMP + diphosphate. In terms of biological role, aspartyl-tRNA synthetase with relaxed tRNA specificity since it is able to aspartylate not only its cognate tRNA(Asp) but also tRNA(Asn). Reaction proceeds in two steps: L-aspartate is first activated by ATP to form Asp-AMP and then transferred to the acceptor end of tRNA(Asp/Asn). The sequence is that of Aspartate--tRNA(Asp/Asn) ligase from Mycolicibacterium paratuberculosis (strain ATCC BAA-968 / K-10) (Mycobacterium paratuberculosis).